We begin with the raw amino-acid sequence, 434 residues long: Adenylosuccinate synthetase (434 aa).

Residues 15 to 21 (GDEGKGK) and 43 to 45 (GHT) contribute to the GTP site. Asp-16 acts as the Proton acceptor in catalysis. Residues Asp-16 and Gly-43 each contribute to the Mg(2+) site. IMP-binding positions include 16–19 (DEGK), 41–44 (NAGH), Thr-133, Arg-147, Gln-228, Thr-243, and Arg-307. His-44 functions as the Proton donor in the catalytic mechanism. Substrate is bound at residue 303 to 309 (SVTGRAR). GTP contacts are provided by residues Arg-309, 335-337 (KLD), and 418-420 (STG).

This sequence belongs to the adenylosuccinate synthetase family. Homodimer. It depends on Mg(2+) as a cofactor.

The protein localises to the cytoplasm. The catalysed reaction is IMP + L-aspartate + GTP = N(6)-(1,2-dicarboxyethyl)-AMP + GDP + phosphate + 2 H(+). The protein operates within purine metabolism; AMP biosynthesis via de novo pathway; AMP from IMP: step 1/2. In terms of biological role, plays an important role in the de novo pathway of purine nucleotide biosynthesis. Catalyzes the first committed step in the biosynthesis of AMP from IMP. This Neisseria gonorrhoeae (strain NCCP11945) protein is Adenylosuccinate synthetase.